The chain runs to 180 residues: uncharacterized protein (180 aa).

The signal sequence occupies residues 1 to 30; that stretch reads MRHKIITFILAVVVIIIIGNMIGGGGGSEA. The tract at residues 25 to 46 is disordered; that stretch reads GGGSEATSKTSSSSKAETEKTY. Residues 29–39 are compositionally biased toward low complexity; it reads EATSKTSSSSK.

Its subcellular location is the secreted. This is an uncharacterized protein from Bacillus subtilis (strain 168).